The chain runs to 432 residues: Trigger factor (432 aa).

A PPIase FKBP-type domain is found at 163-248; the sequence is GDIAVIDFEG…LKALNKKELP (86 aa).

This sequence belongs to the FKBP-type PPIase family. Tig subfamily.

Its subcellular location is the cytoplasm. The enzyme catalyses [protein]-peptidylproline (omega=180) = [protein]-peptidylproline (omega=0). Its function is as follows. Involved in protein export. Acts as a chaperone by maintaining the newly synthesized protein in an open conformation. Functions as a peptidyl-prolyl cis-trans isomerase. The sequence is that of Trigger factor from Thermoanaerobacter pseudethanolicus (strain ATCC 33223 / 39E) (Clostridium thermohydrosulfuricum).